Consider the following 277-residue polypeptide: Energy-coupling factor transporter ATP-binding protein EcfA1 (277 aa).

Residues 4-238 form the ABC transporter domain; the sequence is IETQDLCHTY…PDLLSSVRLD (235 aa). ATP is bound at residue 37–44; it reads GPNGAGKS.

It belongs to the ABC transporter superfamily. Energy-coupling factor EcfA family. As to quaternary structure, forms a stable energy-coupling factor (ECF) transporter complex composed of 2 membrane-embedded substrate-binding proteins (S component), 2 ATP-binding proteins (A component) and 2 transmembrane proteins (T component).

The protein localises to the cell membrane. Its function is as follows. ATP-binding (A) component of a common energy-coupling factor (ECF) ABC-transporter complex. Unlike classic ABC transporters this ECF transporter provides the energy necessary to transport a number of different substrates. The sequence is that of Energy-coupling factor transporter ATP-binding protein EcfA1 from Methanospirillum hungatei JF-1 (strain ATCC 27890 / DSM 864 / NBRC 100397 / JF-1).